Reading from the N-terminus, the 492-residue chain is Adenosylhomocysteinase (492 aa).

T68, D153, and E215 together coordinate substrate. An NAD(+)-binding site is contributed by 216 to 218 (TTT). K245 and D249 together coordinate substrate. Residues N250, 279 to 284 (GYGDVG), E302, N337, 358 to 360 (IGH), and N406 contribute to the NAD(+) site.

The protein belongs to the adenosylhomocysteinase family. The cofactor is NAD(+).

The protein resides in the cytoplasm. The catalysed reaction is S-adenosyl-L-homocysteine + H2O = L-homocysteine + adenosine. The protein operates within amino-acid biosynthesis; L-homocysteine biosynthesis; L-homocysteine from S-adenosyl-L-homocysteine: step 1/1. In terms of biological role, may play a key role in the regulation of the intracellular concentration of adenosylhomocysteine. The chain is Adenosylhomocysteinase from Mycobacterium marinum (strain ATCC BAA-535 / M).